The primary structure comprises 421 residues: Na(+)/H(+) antiporter NhaA 1 (421 aa).

11 helical membrane-spanning segments follow: residues 48 to 68, 93 to 113, 129 to 149, 157 to 177, 187 to 207, 215 to 235, 253 to 273, 299 to 319, 326 to 346, 364 to 384, and 392 to 412; these read SSGL…NSPW, LYWW…GLEI, SLAL…YTLV, AGWG…LALL, VLLA…IALF, LALG…AAGV, LASG…IPLG, FLIL…GGSL, VVLG…WLAV, GLGL…GLAF, and AAKL…ITVL.

This sequence belongs to the NhaA Na(+)/H(+) (TC 2.A.33) antiporter family.

It localises to the cell membrane. It catalyses the reaction Na(+)(in) + 2 H(+)(out) = Na(+)(out) + 2 H(+)(in). Its function is as follows. Na(+)/H(+) antiporter that extrudes sodium in exchange for external protons. This chain is Na(+)/H(+) antiporter NhaA 1, found in Deinococcus geothermalis (strain DSM 11300 / CIP 105573 / AG-3a).